The chain runs to 475 residues: BTB/POZ domain-containing protein 10 (475 aa).

The disordered stretch occupies residues 1–143 (MAGRPHPYDG…SSQSSSDGSC (143 aa)). Positions 22-31 (LHSRPRKLYK) are enriched in basic residues. The span at 57 to 80 (GHERSRDRRRSSDRSRDSSHERTE) shows a compositional bias: basic and acidic residues. Polar residues predominate over residues 81-94 (SQLTPCIRNVTSPT). The segment covering 97 to 107 (HHVEREKDHSS) has biased composition (basic and acidic residues). A compositionally biased stretch (low complexity) spans 108–142 (SRPSSPRPQKASPNGSISSAGNSSRNSSQSSSDGS). The interaction with AKT family members stretch occupies residues 146–475 (AGEMVFVYEN…LDPDAQNPML (330 aa)). One can recognise a BTB domain in the interval 167 to 241 (ERVTLIVDNT…YKTGIIRCPD (75 aa)). The disordered stretch occupies residues 455-475 (LPIHPPSGNSDLDPDAQNPML).

As to quaternary structure, interacts (via C-terminal 330-amino-acid region) with AKT1; AKT2 and AKT3. Interacts with PPP2CA and PPP1CA. As to expression, ubiquitously expressed. Highly expressed in adult brain, testis, aorta and small intestine and weakly expressed in the heart, lung, liver, kidney, pancreas, spleen, thymus, prostate, ovary and colon. Down-regulated in glioma.

The protein localises to the nucleus. It is found in the cytoplasm. Plays a major role as an activator of AKT family members by inhibiting PPP2CA-mediated dephosphorylation, thereby keeping AKTs activated. Plays a role in preventing motor neuronal death and accelerating the growth of pancreatic beta cells. This is BTB/POZ domain-containing protein 10 (BTBD10) from Homo sapiens (Human).